Here is an 817-residue protein sequence, read N- to C-terminus: Sorting nexin-29 (817 aa).

Positions 37–181 constitute an RUN domain; sequence SDSDSRVTCL…ILFAINIDNK (145 aa). Phosphoserine occurs at positions 269, 292, 293, 331, and 345. Residues 271–299 form a disordered region; sequence DDEEDEQSSGDVFKKIPGAGESSEENSDR. Disordered stretches follow at residues 344-381 and 417-460; these read KSID…LDAG and APLG…LPSA. A compositionally biased stretch (acidic residues) spans 347–358; the sequence is DDEDADENEDDV. Over residues 369–378 the composition is skewed to basic and acidic residues; it reads GHSESPEKPL. The segment covering 445–460 has biased composition (low complexity); the sequence is SPPGQESPLSSLLPSA. At Ser-451 the chain carries Phosphoserine. The stretch at 466–546 forms a coiled coil; the sequence is MTVSDLRQAI…VLKVQLKKYV (81 aa). Ser-641 is modified (phosphoserine). Thr-643 is subject to Phosphothreonine. A phosphoserine mark is found at Ser-644 and Ser-648. Residues 658–781 enclose the PX domain; it reads ALINVWIPSV…PFFVDITPPG (124 aa). The disordered stretch occupies residues 784–817; sequence LTKNSRPKVASRFPKLARGHPRETRNVEPQSGDL.

It belongs to the sorting nexin family.

This Bos taurus (Bovine) protein is Sorting nexin-29 (SNX29).